Here is a 384-residue protein sequence, read N- to C-terminus: Dual-specificity RNA methyltransferase RlmN (384 aa).

Residue Glu93 is the Proton acceptor of the active site. Positions 99 to 339 constitute a Radical SAM core domain; it reads EDTRGTLCVS…TTIRKTRGDD (241 aa). A disulfide bridge connects residues Cys106 and Cys344. Positions 113, 117, and 120 each coordinate [4Fe-4S] cluster. Residues 170–171, Ser202, 224–226, and Asn301 each bind S-adenosyl-L-methionine; these read GE and SLH. Cys344 acts as the S-methylcysteine intermediate in catalysis.

Belongs to the radical SAM superfamily. RlmN family. [4Fe-4S] cluster serves as cofactor.

It is found in the cytoplasm. It catalyses the reaction adenosine(2503) in 23S rRNA + 2 reduced [2Fe-2S]-[ferredoxin] + 2 S-adenosyl-L-methionine = 2-methyladenosine(2503) in 23S rRNA + 5'-deoxyadenosine + L-methionine + 2 oxidized [2Fe-2S]-[ferredoxin] + S-adenosyl-L-homocysteine. The catalysed reaction is adenosine(37) in tRNA + 2 reduced [2Fe-2S]-[ferredoxin] + 2 S-adenosyl-L-methionine = 2-methyladenosine(37) in tRNA + 5'-deoxyadenosine + L-methionine + 2 oxidized [2Fe-2S]-[ferredoxin] + S-adenosyl-L-homocysteine. Functionally, specifically methylates position 2 of adenine 2503 in 23S rRNA and position 2 of adenine 37 in tRNAs. m2A2503 modification seems to play a crucial role in the proofreading step occurring at the peptidyl transferase center and thus would serve to optimize ribosomal fidelity. The sequence is that of Dual-specificity RNA methyltransferase RlmN from Cupriavidus metallidurans (strain ATCC 43123 / DSM 2839 / NBRC 102507 / CH34) (Ralstonia metallidurans).